Reading from the N-terminus, the 306-residue chain is Glutaminase (306 aa).

The substrate site is built by Ser-64, Asn-115, Glu-159, Asn-166, Tyr-190, Tyr-242, and Val-260.

It belongs to the glutaminase family. In terms of assembly, homotetramer.

The catalysed reaction is L-glutamine + H2O = L-glutamate + NH4(+). This chain is Glutaminase, found in Aliivibrio fischeri (strain ATCC 700601 / ES114) (Vibrio fischeri).